A 349-amino-acid polypeptide reads, in one-letter code: Histidinol-phosphate aminotransferase (349 aa).

N6-(pyridoxal phosphate)lysine is present on Lys210.

This sequence belongs to the class-II pyridoxal-phosphate-dependent aminotransferase family. Histidinol-phosphate aminotransferase subfamily. Homodimer. The cofactor is pyridoxal 5'-phosphate.

The enzyme catalyses L-histidinol phosphate + 2-oxoglutarate = 3-(imidazol-4-yl)-2-oxopropyl phosphate + L-glutamate. The protein operates within amino-acid biosynthesis; L-histidine biosynthesis; L-histidine from 5-phospho-alpha-D-ribose 1-diphosphate: step 7/9. The polypeptide is Histidinol-phosphate aminotransferase (Flavobacterium johnsoniae (strain ATCC 17061 / DSM 2064 / JCM 8514 / BCRC 14874 / CCUG 350202 / NBRC 14942 / NCIMB 11054 / UW101) (Cytophaga johnsonae)).